Reading from the N-terminus, the 367-residue chain is GTP cyclohydrolase FolE2 (367 aa).

The protein belongs to the GTP cyclohydrolase IV family.

It carries out the reaction GTP + H2O = 7,8-dihydroneopterin 3'-triphosphate + formate + H(+). The protein operates within cofactor biosynthesis; 7,8-dihydroneopterin triphosphate biosynthesis; 7,8-dihydroneopterin triphosphate from GTP: step 1/1. Functionally, converts GTP to 7,8-dihydroneopterin triphosphate. This Dinoroseobacter shibae (strain DSM 16493 / NCIMB 14021 / DFL 12) protein is GTP cyclohydrolase FolE2.